The following is a 509-amino-acid chain: MIGTIAGVSGIAGAAVGAGACYLWLKNSTQKKFAHLEMEAKAKAKAISNEAELLLQESQMKIKTRELEHEAEFQKRLVQVEERNRALILEQKAVEKEEEALLLLEQRILEKESVLEALEEKKQKQISETVEKLQHAASMTQEEAKAYILEKVEEQSRAEIASIVRRYEQLAKEEGEKKANYILAQATTRYAGEFAGERLINLVNLPSDEHKGRIIGKEGRNIKALEMLLGVDIVIDETPGVILVSSFNLYRRAIATRVIEILIEDGRIHPGRIEEVHEKVEKEFEEKTYEEGENILIDLGLFPMHEELVKLIGRLKYRASYGQNALAHTLEVAKLARVMAAEMGGDEKLALRAGLLHDIGKALTQDMGGSHVEIGAELCRRYNEHPTVINAIYAHHGHEEPDSVESAAVCAADTLSAARPGARREVLESFTKRVKEIEEIATSKENVERAYAINAGREIRVFVNANRMSDNEAVLLSKEIAKEIKDKVQFPGEIKVNVIRETRAVSIAK.

The helical transmembrane segment at Ile5 to Leu25 threads the bilayer. In terms of domain architecture, KH spans Leu199–Asp265. The HD domain occupies Ala325–Ala418.

It belongs to the RNase Y family.

The protein resides in the cell membrane. In terms of biological role, endoribonuclease that initiates mRNA decay. The sequence is that of Ribonuclease Y from Sulfurovum sp. (strain NBC37-1).